A 622-amino-acid chain; its full sequence is Calmodulin-binding protein 60 C (622 aa).

The span at 1-19 (MQTRYMERTNSMREKRKLE) shows a compositional bias: basic and acidic residues. The segment at 1–35 (MQTRYMERTNSMREKRKLEEDDNQQQQQQPERKRP) is disordered. Residues 10 to 89 (NSMREKRKLE…RLSERSSPKR (80 aa)) are calmodulin-binding. A DNA-binding region spans residues 159-282 (EDDDGWSGEE…AFHKKLNKAG (124 aa)).

This sequence belongs to the plant ACBP60 protein family. As to quaternary structure, interacts with calmodulin (CaM). In terms of tissue distribution, expressed in stems, flowers and root.

Its subcellular location is the nucleus. Transcription activator that binds DNA in a sequence-specific manner, likely 5'-GAAATTTTGG-3', to promote the expression of target genes. This Arabidopsis thaliana (Mouse-ear cress) protein is Calmodulin-binding protein 60 C.